We begin with the raw amino-acid sequence, 297 residues long: tRNA pseudouridine synthase B (297 aa).

Catalysis depends on D44, which acts as the Nucleophile.

Belongs to the pseudouridine synthase TruB family. Type 1 subfamily.

The enzyme catalyses uridine(55) in tRNA = pseudouridine(55) in tRNA. Responsible for synthesis of pseudouridine from uracil-55 in the psi GC loop of transfer RNAs. This is tRNA pseudouridine synthase B from Corynebacterium aurimucosum (strain ATCC 700975 / DSM 44827 / CIP 107346 / CN-1) (Corynebacterium nigricans).